A 432-amino-acid chain; its full sequence is 3-oxo-tetronate kinase (432 aa).

Residues His-155, Ser-272, Ala-324, Gly-344, Glu-348, 370–373 (GGET), and Gly-414 each bind ATP.

Belongs to the four-carbon acid sugar kinase family.

It catalyses the reaction 3-dehydro-L-erythronate + ATP = 3-dehydro-4-O-phospho-L-erythronate + ADP + H(+). The catalysed reaction is 3-dehydro-D-erythronate + ATP = 3-dehydro-4-O-phospho-D-erythronate + ADP + H(+). Catalyzes the ATP-dependent phosphorylation of 3-oxo-tetronate to 3-oxo-tetronate 4-phosphate. The polypeptide is 3-oxo-tetronate kinase (Cupriavidus necator (strain ATCC 17699 / DSM 428 / KCTC 22496 / NCIMB 10442 / H16 / Stanier 337) (Ralstonia eutropha)).